A 510-amino-acid chain; its full sequence is Pentatricopeptide repeat-containing protein At1g71060, mitochondrial (510 aa).

The transit peptide at 1–14 (MVFSRFFRVTGVNL) directs the protein to the mitochondrion. 10 PPR repeats span residues 127 to 157 (TTSN…MKAK), 161 to 195 (SKET…GFKM), 196 to 230 (ESSD…RFEP), 231 to 265 (DIKS…GFEP), 266 to 300 (DVVA…NCKP), 301 to 335 (SPHI…GFPL), 336 to 370 (EAPT…GVGP), 371 to 401 (NART…MSCE), 403 to 437 (TVST…GVLP), and 438 to 472 (GMHM…GIRP).

The protein belongs to the PPR family. P subfamily.

Its subcellular location is the mitochondrion. This Arabidopsis thaliana (Mouse-ear cress) protein is Pentatricopeptide repeat-containing protein At1g71060, mitochondrial.